The following is a 96-amino-acid chain: Secretoglobin family 2B member 2 (96 aa).

A signal peptide spans 1–23 (MRVTSATCALLLALICSVQLGDA).

This sequence belongs to the secretoglobin family.

It is found in the secreted. The protein is Secretoglobin family 2B member 2 (SCGB2B2) of Homo sapiens (Human).